A 96-amino-acid chain; its full sequence is UPF0166 protein aq_448 (96 aa).

The protein belongs to the UPF0166 family.

The chain is UPF0166 protein aq_448 from Aquifex aeolicus (strain VF5).